We begin with the raw amino-acid sequence, 228 residues long: Large ribosomal subunit protein uL1 (228 aa).

The protein belongs to the universal ribosomal protein uL1 family. In terms of assembly, part of the 50S ribosomal subunit.

Its function is as follows. Binds directly to 23S rRNA. The L1 stalk is quite mobile in the ribosome, and is involved in E site tRNA release. In terms of biological role, protein L1 is also a translational repressor protein, it controls the translation of the L11 operon by binding to its mRNA. The chain is Large ribosomal subunit protein uL1 from Clavibacter michiganensis subsp. michiganensis (strain NCPPB 382).